A 156-amino-acid polypeptide reads, in one-letter code: ATP synthase subunit b (156 aa).

The helical transmembrane segment at 7–26 (FIGQMVAFAIFIYLTYRYVW) threads the bilayer.

The protein belongs to the ATPase B chain family. In terms of assembly, F-type ATPases have 2 components, F(1) - the catalytic core - and F(0) - the membrane proton channel. F(1) has five subunits: alpha(3), beta(3), gamma(1), delta(1), epsilon(1). F(0) has three main subunits: a(1), b(2) and c(10-14). The alpha and beta chains form an alternating ring which encloses part of the gamma chain. F(1) is attached to F(0) by a central stalk formed by the gamma and epsilon chains, while a peripheral stalk is formed by the delta and b chains.

It localises to the cell inner membrane. Functionally, f(1)F(0) ATP synthase produces ATP from ADP in the presence of a proton or sodium gradient. F-type ATPases consist of two structural domains, F(1) containing the extramembraneous catalytic core and F(0) containing the membrane proton channel, linked together by a central stalk and a peripheral stalk. During catalysis, ATP synthesis in the catalytic domain of F(1) is coupled via a rotary mechanism of the central stalk subunits to proton translocation. Its function is as follows. Component of the F(0) channel, it forms part of the peripheral stalk, linking F(1) to F(0). In Cellvibrio japonicus (strain Ueda107) (Pseudomonas fluorescens subsp. cellulosa), this protein is ATP synthase subunit b.